The primary structure comprises 213 residues: Bcl-2-related ovarian killer protein (213 aa).

The residue at position 7 (Ser7) is a Phosphoserine. The tract at residues 15–45 (MDAFDRSPTDKELVAQAKALGREYVHARLLR) is interactions with ITPR1. Glycyl lysine isopeptide (Lys-Gly) (interchain with G-Cter in ubiquitin) cross-links involve residues Lys25 and Lys32. The BH4 motif lies at 32–44 (KALGREYVHARLL). Residues 67-83 (VCTVLLRLGDELEQIRP) carry the BH3 motif. The segment at 71-79 (LLRLGDELE) is nuclear export signal. Residues 113–132 (HIFSAGITWGKVVSLYSVAA) carry the BH1 motif. Residues Lys160 and Lys177 each participate in a glycyl lysine isopeptide (Lys-Gly) (interchain with G-Cter in ubiquitin) cross-link. A BH2 motif is present at residues 165 to 179 (WLRRRGGWTDVLKCV). A helical membrane pass occupies residues 190 to 210 (WLVATLCSFGRFLKAAFFLLL).

Belongs to the Bcl-2 family. In terms of assembly, monomer; positively regulates apoptotic process. Homodimer. Heterodimer. Oligomer; promoted by apoptotic stimuli and BH3-only proteins; mediates constitutive activation. Interacts (via BH4 domain) with ITPR1; enhances BOK expression and stabilization; limits apoptosis and prevents ubiquitination and then degradation; protects ITPR1 from proteolysis by CASP3 during apoptosis. Interacts with ITPR2 and ITPR3; binds most strongly to ITPR2, and barely to ITPR3; regulates their expression. Interacts with XPO1; translocates to the cytoplasm. Interacts with BNIP3; promotes oligomerization. Ubiquitinated by AMFR/gp78 E3 ubiquitin ligase complex; mediates degradation by ubiquitin-proteasome pathway in a VCP/p97-dependent manner; prevents from proapoptotic activity; promotes degradation of newly synthesized proteins that are not ITPR1 associated. In terms of tissue distribution, widely expressed. Highly expressed in brain, kidney, and spleen.

It localises to the mitochondrion membrane. It is found in the endoplasmic reticulum membrane. The protein localises to the mitochondrion inner membrane. The protein resides in the cytoplasm. Its subcellular location is the nucleus. It localises to the mitochondrion. It is found in the endoplasmic reticulum. The protein localises to the mitochondrion outer membrane. The protein resides in the early endosome membrane. Its subcellular location is the recycling endosome membrane. It localises to the nucleus outer membrane. It is found in the golgi apparatus. The protein localises to the cis-Golgi network membrane. The protein resides in the trans-Golgi network membrane. Its subcellular location is the membrane. Apoptosis regulator that functions through different apoptotic signaling pathways. Plays a roles as pro-apoptotic protein that positively regulates intrinsic apoptotic process in a BAX- and BAK1-dependent manner or in a BAX- and BAK1-independent manner. In response to endoplasmic reticulum stress promotes mitochondrial apoptosis through downstream BAX/BAK1 activation and positive regulation of PERK-mediated unfolded protein response. Activates apoptosis independently of heterodimerization with survival-promoting BCL2 and BCL2L1 through induction of mitochondrial outer membrane permeabilization, in a BAX- and BAK1-independent manner, in response to inhibition of ERAD-proteasome degradation system, resulting in cytochrome c release. In response to DNA damage, mediates intrinsic apoptotic process in a TP53-dependent manner. Plays a role in granulosa cell apoptosis by CASP3 activation. Plays a roles as anti-apoptotic protein during neuronal apoptotic process, by negatively regulating poly ADP-ribose polymerase-dependent cell death through regulation of neuronal calcium homeostasis and mitochondrial bioenergetics in response to NMDA excitation. In addition to its role in apoptosis, may regulate trophoblast cell proliferation during the early stages of placental development, by acting on G1/S transition through regulation of CCNE1 expression. May also play a role as an inducer of autophagy by disrupting interaction between MCL1 and BECN1. This is Bcl-2-related ovarian killer protein from Mus musculus (Mouse).